Reading from the N-terminus, the 131-residue chain is Histone H2A type 1-A (131 aa).

The disordered stretch occupies residues Met-1–Gly-23. Residue Ser-2 is modified to N-acetylserine. The residue at position 2 (Ser-2) is a Phosphoserine; by RPS6KA5. Position 4 is a citrulline; alternate (Arg-4). Arg-4 carries the symmetric dimethylarginine; by PRMT5; alternate modification. An N6-(2-hydroxyisobutyryl)lysine modification is found at Lys-6. Positions Gln-7–Ser-19 are enriched in basic residues. An N6-(2-hydroxyisobutyryl)lysine; alternate modification is found at Lys-10. N6-(beta-hydroxybutyryl)lysine; alternate is present on Lys-10. At Lys-10 the chain carries N6-lactoyllysine; alternate. N6-succinyllysine; alternate is present on Lys-10. An N6-(beta-hydroxybutyryl)lysine modification is found at Lys-14. Glycyl lysine isopeptide (Lys-Gly) (interchain with G-Cter in ubiquitin) cross-links involve residues Lys-14 and Lys-16. Lys-37 carries the post-translational modification N6-(2-hydroxyisobutyryl)lysine; alternate. N6-(beta-hydroxybutyryl)lysine; alternate is present on Lys-37. Lys-37 carries the post-translational modification N6-crotonyllysine; alternate. Lys-75 and Lys-76 each carry N6-(2-hydroxyisobutyryl)lysine. Lys-96 carries the post-translational modification N6-(2-hydroxyisobutyryl)lysine; alternate. Lys-96 is subject to N6-(beta-hydroxybutyryl)lysine; alternate. Lys-96 is modified (N6-succinyllysine; alternate). Lys-96 carries the N6-glutaryllysine; alternate modification. N5-methylglutamine is present on Gln-105. Lys-119 is subject to N6-(2-hydroxyisobutyryl)lysine; alternate. Residue Lys-119 is modified to N6-(beta-hydroxybutyryl)lysine; alternate. An N6-crotonyllysine; alternate mark is found at Lys-119 and Lys-120. 2 positions are modified to N6-glutaryllysine; alternate: Lys-119 and Lys-120. Lys-120 is covalently cross-linked (Glycyl lysine isopeptide (Lys-Gly) (interchain with G-Cter in ubiquitin); alternate). Phosphothreonine; by DCAF1 is present on Thr-121. Lys-127 carries the N6-crotonyllysine modification.

The protein belongs to the histone H2A family. As to quaternary structure, the nucleosome is a histone octamer containing two molecules each of H2A, H2B, H3 and H4 assembled in one H3-H4 heterotetramer and two H2A-H2B heterodimers. The octamer wraps approximately 147 bp of DNA. Deiminated on Arg-4 in granulocytes upon calcium entry. Post-translationally, monoubiquitination of Lys-120 (H2AK119Ub) by RING1, TRIM37 and RNF2/RING2 complex gives a specific tag for epigenetic transcriptional repression and participates in X chromosome inactivation of female mammals. It is involved in the initiation of both imprinted and random X inactivation. Ubiquitinated H2A is enriched in inactive X chromosome chromatin. Ubiquitination of H2A functions downstream of methylation of 'Lys-27' of histone H3 (H3K27me). H2AK119Ub by RNF2/RING2 can also be induced by ultraviolet and may be involved in DNA repair. Monoubiquitination of Lys-120 (H2AK119Ub) by TRIM37 may promote transformation of cells in a number of breast cancers. Following DNA double-strand breaks (DSBs), it is ubiquitinated through 'Lys-63' linkage of ubiquitin moieties by the E2 ligase UBE2N and the E3 ligases RNF8 and RNF168, leading to the recruitment of repair proteins to sites of DNA damage. Ubiquitination at Lys-14 and Lys-16 (H2AK13Ub and H2AK15Ub, respectively) in response to DNA damage is initiated by RNF168 that mediates monoubiquitination at these 2 sites, and 'Lys-63'-linked ubiquitin are then conjugated to monoubiquitin; RNF8 is able to extend 'Lys-63'-linked ubiquitin chains in vitro. Deubiquitinated by USP51 at Lys-14 and Lys-16 (H2AK13Ub and H2AK15Ub, respectively) after damaged DNA is repaired. H2AK119Ub and ionizing radiation-induced 'Lys-63'-linked ubiquitination (H2AK13Ub and H2AK15Ub) are distinct events. In terms of processing, phosphorylation on Ser-2 (H2AS1ph) is enhanced during mitosis. Phosphorylation on Ser-2 by RPS6KA5/MSK1 directly represses transcription. Acetylation of H3 inhibits Ser-2 phosphorylation by RPS6KA5/MSK1. Phosphorylation at Thr-121 (H2AT120ph) by DCAF1 is present in the regulatory region of many tumor suppresor genes and down-regulates their transcription. Glutamine methylation at Gln-105 (H2AQ104me) by FBL is specifically dedicated to polymerase I. It is present at 35S ribosomal DNA locus and impairs binding of the FACT complex. Post-translationally, symmetric dimethylation on Arg-4 by the PRDM1/PRMT5 complex may play a crucial role in the germ-cell lineage. In terms of processing, crotonylation (Kcr) is specifically present in male germ cells and marks testis-specific genes in post-meiotic cells, including X-linked genes that escape sex chromosome inactivation in haploid cells. Crotonylation marks active promoters and enhancers and confers resistance to transcriptional repressors. It is also associated with post-meiotically activated genes on autosomes. Lactylated in macrophages by EP300/P300 by using lactoyl-CoA directly derived from endogenous or exogenous lactate, leading to stimulates gene transcription.

The protein resides in the nucleus. Its subcellular location is the chromosome. Functionally, core component of nucleosome. Nucleosomes wrap and compact DNA into chromatin, limiting DNA accessibility to the cellular machineries which require DNA as a template. Histones thereby play a central role in transcription regulation, DNA repair, DNA replication and chromosomal stability. DNA accessibility is regulated via a complex set of post-translational modifications of histones, also called histone code, and nucleosome remodeling. The sequence is that of Histone H2A type 1-A from Homo sapiens (Human).